The sequence spans 84 residues: Large ribosomal subunit protein bL27 (84 aa).

Residues 1–27 (MAHKKGQGASRNGRDSKSKRLGVKVGA) form a disordered region.

The protein belongs to the bacterial ribosomal protein bL27 family.

The polypeptide is Large ribosomal subunit protein bL27 (Chlamydia pneumoniae (Chlamydophila pneumoniae)).